The chain runs to 484 residues: tRNA sulfurtransferase (484 aa).

The 105-residue stretch at 63-167 (EAFAERLACI…NDNLYLIDKR (105 aa)) folds into the THUMP domain. ATP is bound by residues 185–186 (LI), K267, G289, and Q298. Cysteines 346 and 458 form a disulfide. A Rhodanese domain is found at 406–484 (ISAGEIIIDV…GYNNVKVYRP (79 aa)). The active-site Cysteine persulfide intermediate is the C458.

Belongs to the ThiI family.

It is found in the cytoplasm. It catalyses the reaction [ThiI sulfur-carrier protein]-S-sulfanyl-L-cysteine + a uridine in tRNA + 2 reduced [2Fe-2S]-[ferredoxin] + ATP + H(+) = [ThiI sulfur-carrier protein]-L-cysteine + a 4-thiouridine in tRNA + 2 oxidized [2Fe-2S]-[ferredoxin] + AMP + diphosphate. The catalysed reaction is [ThiS sulfur-carrier protein]-C-terminal Gly-Gly-AMP + S-sulfanyl-L-cysteinyl-[cysteine desulfurase] + AH2 = [ThiS sulfur-carrier protein]-C-terminal-Gly-aminoethanethioate + L-cysteinyl-[cysteine desulfurase] + A + AMP + 2 H(+). It participates in cofactor biosynthesis; thiamine diphosphate biosynthesis. In terms of biological role, catalyzes the ATP-dependent transfer of a sulfur to tRNA to produce 4-thiouridine in position 8 of tRNAs, which functions as a near-UV photosensor. Also catalyzes the transfer of sulfur to the sulfur carrier protein ThiS, forming ThiS-thiocarboxylate. This is a step in the synthesis of thiazole, in the thiamine biosynthesis pathway. The sulfur is donated as persulfide by IscS. This is tRNA sulfurtransferase from Shewanella pealeana (strain ATCC 700345 / ANG-SQ1).